The sequence spans 288 residues: 4-diphosphocytidyl-2-C-methyl-D-erythritol kinase (288 aa).

K8 is an active-site residue. P90 to S100 is an ATP binding site. The active site involves D132.

Belongs to the GHMP kinase family. IspE subfamily.

It catalyses the reaction 4-CDP-2-C-methyl-D-erythritol + ATP = 4-CDP-2-C-methyl-D-erythritol 2-phosphate + ADP + H(+). It functions in the pathway isoprenoid biosynthesis; isopentenyl diphosphate biosynthesis via DXP pathway; isopentenyl diphosphate from 1-deoxy-D-xylulose 5-phosphate: step 3/6. Its function is as follows. Catalyzes the phosphorylation of the position 2 hydroxy group of 4-diphosphocytidyl-2C-methyl-D-erythritol. The polypeptide is 4-diphosphocytidyl-2-C-methyl-D-erythritol kinase (Chlamydia trachomatis serovar D (strain ATCC VR-885 / DSM 19411 / UW-3/Cx)).